The chain runs to 456 residues: Bifunctional protein GlmU (456 aa).

Residues 1 to 229 (MSTSPLSVVI…LSEVEGVNNR (229 aa)) form a pyrophosphorylase region. Residues 11–14 (LAAG), lysine 25, glutamine 76, 81–82 (GT), 103–105 (YGD), glycine 140, glutamate 154, asparagine 169, and asparagine 227 contribute to the UDP-N-acetyl-alpha-D-glucosamine site. Aspartate 105 contacts Mg(2+). Asparagine 227 is a Mg(2+) binding site. The linker stretch occupies residues 230-250 (LQLSALERAYQQQQAQRLLLA). Positions 251–456 (GVMLTDPARF…SGWERPVKKK (206 aa)) are N-acetyltransferase. UDP-N-acetyl-alpha-D-glucosamine contacts are provided by arginine 333 and lysine 351. The active-site Proton acceptor is the histidine 363. UDP-N-acetyl-alpha-D-glucosamine-binding residues include tyrosine 366 and asparagine 377. Acetyl-CoA-binding positions include alanine 380, 386–387 (NY), serine 405, alanine 423, and arginine 440.

It in the N-terminal section; belongs to the N-acetylglucosamine-1-phosphate uridyltransferase family. This sequence in the C-terminal section; belongs to the transferase hexapeptide repeat family. Homotrimer. Mg(2+) serves as cofactor.

Its subcellular location is the cytoplasm. It catalyses the reaction alpha-D-glucosamine 1-phosphate + acetyl-CoA = N-acetyl-alpha-D-glucosamine 1-phosphate + CoA + H(+). The enzyme catalyses N-acetyl-alpha-D-glucosamine 1-phosphate + UTP + H(+) = UDP-N-acetyl-alpha-D-glucosamine + diphosphate. Its pathway is nucleotide-sugar biosynthesis; UDP-N-acetyl-alpha-D-glucosamine biosynthesis; N-acetyl-alpha-D-glucosamine 1-phosphate from alpha-D-glucosamine 6-phosphate (route II): step 2/2. It participates in nucleotide-sugar biosynthesis; UDP-N-acetyl-alpha-D-glucosamine biosynthesis; UDP-N-acetyl-alpha-D-glucosamine from N-acetyl-alpha-D-glucosamine 1-phosphate: step 1/1. It functions in the pathway bacterial outer membrane biogenesis; LPS lipid A biosynthesis. Catalyzes the last two sequential reactions in the de novo biosynthetic pathway for UDP-N-acetylglucosamine (UDP-GlcNAc). The C-terminal domain catalyzes the transfer of acetyl group from acetyl coenzyme A to glucosamine-1-phosphate (GlcN-1-P) to produce N-acetylglucosamine-1-phosphate (GlcNAc-1-P), which is converted into UDP-GlcNAc by the transfer of uridine 5-monophosphate (from uridine 5-triphosphate), a reaction catalyzed by the N-terminal domain. In Edwardsiella ictaluri (strain 93-146), this protein is Bifunctional protein GlmU.